The primary structure comprises 235 residues: Elongation factor Tu, chloroplastic (235 aa).

The tr-type G domain maps to 1–125 (KNMITGAAQM…AVDEYIPTPV (125 aa)). Residue 47–50 (NKQD) coordinates GTP.

It belongs to the TRAFAC class translation factor GTPase superfamily. Classic translation factor GTPase family. EF-Tu/EF-1A subfamily.

The protein resides in the plastid. It localises to the chloroplast. The enzyme catalyses GTP + H2O = GDP + phosphate + H(+). GTP hydrolase that promotes the GTP-dependent binding of aminoacyl-tRNA to the A-site of ribosomes during protein biosynthesis. This is Elongation factor Tu, chloroplastic (tufA) from Gracilariopsis lemaneiformis (Red alga).